The sequence spans 528 residues: 2-isopropylmalate synthase (528 aa).

The region spanning isoleucine 12–valine 279 is the Pyruvate carboxyltransferase domain. The Mn(2+) site is built by aspartate 21, histidine 214, histidine 216, and asparagine 250. The regulatory domain stretch occupies residues arginine 401–alanine 528.

It belongs to the alpha-IPM synthase/homocitrate synthase family. LeuA type 1 subfamily. Homodimer. The cofactor is Mn(2+).

It is found in the cytoplasm. The enzyme catalyses 3-methyl-2-oxobutanoate + acetyl-CoA + H2O = (2S)-2-isopropylmalate + CoA + H(+). The protein operates within amino-acid biosynthesis; L-leucine biosynthesis; L-leucine from 3-methyl-2-oxobutanoate: step 1/4. In terms of biological role, catalyzes the condensation of the acetyl group of acetyl-CoA with 3-methyl-2-oxobutanoate (2-ketoisovalerate) to form 3-carboxy-3-hydroxy-4-methylpentanoate (2-isopropylmalate). The protein is 2-isopropylmalate synthase of Stenotrophomonas maltophilia (strain R551-3).